Reading from the N-terminus, the 107-residue chain is Large ribosomal subunit protein uL24 (107 aa).

The protein belongs to the universal ribosomal protein uL24 family. As to quaternary structure, part of the 50S ribosomal subunit.

Functionally, one of two assembly initiator proteins, it binds directly to the 5'-end of the 23S rRNA, where it nucleates assembly of the 50S subunit. Its function is as follows. One of the proteins that surrounds the polypeptide exit tunnel on the outside of the subunit. This is Large ribosomal subunit protein uL24 from Neisseria meningitidis serogroup C (strain 053442).